A 614-amino-acid polypeptide reads, in one-letter code: Chaperone protein DnaK (614 aa).

T175 carries the post-translational modification Phosphothreonine; by autocatalysis. Residues 577-614 (QAGGAEGAADPNAAAGGAQSAPHDDNVVDADFKVDEDK) are disordered. Residues 583-597 (GAADPNAAAGGAQSA) are compositionally biased toward low complexity. Residues 598-614 (PHDDNVVDADFKVDEDK) are compositionally biased toward basic and acidic residues.

The protein belongs to the heat shock protein 70 family.

Functionally, acts as a chaperone. This is Chaperone protein DnaK from Clostridium beijerinckii (strain ATCC 51743 / NCIMB 8052) (Clostridium acetobutylicum).